A 5400-amino-acid polypeptide reads, in one-letter code: Midasin (5400 aa).

AAA-ATPase protomer regions lie at residues methionine 345 to proline 571, leucine 656 to alanine 986, serine 1050 to valine 1308, serine 1347 to alanine 1652, valine 1769 to isoleucine 2023, and isoleucine 2074 to proline 2347. ATP-binding positions include glycine 360–serine 367, glycine 674–threonine 681, glycine 1079–threonine 1086, glycine 1369–threonine 1376, glycine 1786–threonine 1793, and glycine 2095–threonine 2102. Residues isoleucine 2435–aspartate 4569 are linker. Coiled-coil stretches lie at residues leucine 2896–aspartate 2916, alanine 3233–asparagine 3253, and methionine 3896–leucine 3916. 3 disordered regions span residues glutamate 4540–asparagine 4890, threonine 4905–asparagine 4929, and glutamine 4990–serine 5069. Residues glutamine 4576–serine 4612 are compositionally biased toward basic and acidic residues. The segment covering valine 4613–leucine 4631 has biased composition (acidic residues). Composition is skewed to basic and acidic residues over residues aspartate 4641 to lysine 4652 and methionine 4661 to glycine 4687. 2 stretches are compositionally biased toward acidic residues: residues valine 4688 to asparagine 4698 and glycine 4706 to asparagine 4721. The span at leucine 4722–alanine 4732 shows a compositional bias: basic and acidic residues. The span at valine 4740 to glutamate 4750 shows a compositional bias: acidic residues. The span at methionine 4751 to alanine 4762 shows a compositional bias: basic and acidic residues. Residues glycine 4779 to alanine 4798 show a composition bias toward acidic residues. A compositionally biased stretch (basic and acidic residues) spans glutamate 4799–proline 4810. Positions glycine 4811–proline 4822 are enriched in acidic residues. Positions isoleucine 4823–methionine 4834 are enriched in basic and acidic residues. Polar residues-rich tracts occupy residues arginine 4839–glycine 4855, threonine 4864–aspartate 4874, proline 4916–valine 4928, and serine 5030–glutamate 5040. A Nuclear localization signal motif is present at residues methionine 5157 to isoleucine 5164. The 202-residue stretch at glutamine 5186–valine 5387 folds into the VWFA domain. Residues valine 5271–glutamine 5291 adopt a coiled-coil conformation.

Belongs to the midasin family. Associates with pre-60S ribosomes in the nucleoplasm. As to expression, constitutively and ubiquitously expressed. Mostly observed in the shoot apex and root tip, and, to a lower extent, in mature seeds, seedling (excluding the hypocotyl), roots, stems, leaves and flowers.

It localises to the nucleus. Its subcellular location is the nucleolus. The protein localises to the nucleoplasm. In terms of biological role, nuclear chaperone required for maturation and nuclear export of pre-60S ribosome subunits. Functions at successive maturation steps to remove ribosomal factors at critical transition points, first driving the exit of early pre-60S particles from the nucleolus and then driving late pre-60S particles from the nucleus. Required for female gametophyte development. Involved in the expression regulation of genes related to plant growth and development. This Arabidopsis thaliana (Mouse-ear cress) protein is Midasin.